A 512-amino-acid polypeptide reads, in one-letter code: Kelch repeat protein C2 (512 aa).

Residues 2-67 (ESVIFSINGE…MRWKKINITI (66 aa)) form the BTB domain. Kelch repeat units follow at residues 216–261 (IKHN…LHNC), 262–307 (LYII…VNDG), 309–354 (LYVI…FVND), 356–403 (IYVM…EYDG), 405–449 (IYVI…SCGD), and 452–498 (LIIA…THKS).

This sequence belongs to the poxviruses Kelch family.

In Vaccinia virus (strain Copenhagen) (VACV), this protein is Kelch repeat protein C2.